We begin with the raw amino-acid sequence, 297 residues long: Putative heme-binding peroxidase (297 aa).

Histidine 74 (proton acceptor) is an active-site residue. Histidine 198 serves as a coordination point for heme b. Catalysis depends on tryptophan 214, which acts as the Tryptophan radical intermediate.

The protein belongs to the peroxidase family. Cytochrome c peroxidase subfamily. Heme b serves as cofactor.

Functionally, destroys radicals which are normally produced within the cells and which are toxic to biological systems. The chain is Putative heme-binding peroxidase from Yarrowia lipolytica (strain CLIB 122 / E 150) (Yeast).